The sequence spans 459 residues: uncharacterized protein (459 aa).

Positions 28-47 (AHDEELTGPPQKPAYAAKPA) are disordered. One can recognise an FAD-binding PCMH-type domain in the interval 35–214 (GPPQKPAYAA…TEVIVKLHPR (180 aa)).

Belongs to the oxygen-dependent FAD-linked oxidoreductase family. The cofactor is FAD.

This is an uncharacterized protein from Mycobacterium tuberculosis (strain CDC 1551 / Oshkosh).